A 435-amino-acid polypeptide reads, in one-letter code: Xylose isomerase (435 aa).

Active-site residues include H99 and D102. Mg(2+) contacts are provided by E230, E266, H269, D294, D305, D307, and D337.

It belongs to the xylose isomerase family. As to quaternary structure, homotetramer. Requires Mg(2+) as cofactor.

It is found in the cytoplasm. The enzyme catalyses alpha-D-xylose = alpha-D-xylulofuranose. The polypeptide is Xylose isomerase (Listeria welshimeri serovar 6b (strain ATCC 35897 / DSM 20650 / CCUG 15529 / CIP 8149 / NCTC 11857 / SLCC 5334 / V8)).